A 375-amino-acid polypeptide reads, in one-letter code: Chaperone protein DnaJ (375 aa).

Residues 5–70 (DFYETLGVAK…QKRAAYDRYG (66 aa)) form the J domain. The segment at 136–214 (GKTAQIRVPT…CHGQGRVTEE (79 aa)) adopts a CR-type zinc-finger fold. Zn(2+) is bound by residues Cys-149, Cys-152, Cys-166, Cys-169, Cys-188, Cys-191, Cys-202, and Cys-205. CXXCXGXG motif repeat units lie at residues 149 to 156 (CDVCSGSG), 166 to 173 (CGTCQGTG), 188 to 195 (CPTCHGRG), and 202 to 209 (CPKCHGQG).

This sequence belongs to the DnaJ family. As to quaternary structure, homodimer. Zn(2+) is required as a cofactor.

The protein resides in the cytoplasm. Its function is as follows. Participates actively in the response to hyperosmotic and heat shock by preventing the aggregation of stress-denatured proteins and by disaggregating proteins, also in an autonomous, DnaK-independent fashion. Unfolded proteins bind initially to DnaJ; upon interaction with the DnaJ-bound protein, DnaK hydrolyzes its bound ATP, resulting in the formation of a stable complex. GrpE releases ADP from DnaK; ATP binding to DnaK triggers the release of the substrate protein, thus completing the reaction cycle. Several rounds of ATP-dependent interactions between DnaJ, DnaK and GrpE are required for fully efficient folding. Also involved, together with DnaK and GrpE, in the DNA replication of plasmids through activation of initiation proteins. The chain is Chaperone protein DnaJ from Rhizobium johnstonii (strain DSM 114642 / LMG 32736 / 3841) (Rhizobium leguminosarum bv. viciae).